The following is a 257-amino-acid chain: Putative hydro-lyase Bcenmc03_3969 (257 aa).

The protein belongs to the D-glutamate cyclase family.

This is Putative hydro-lyase Bcenmc03_3969 from Burkholderia orbicola (strain MC0-3).